The following is a 226-amino-acid chain: Urease accessory protein UreF (226 aa).

It belongs to the UreF family. UreD, UreF and UreG form a complex that acts as a GTP-hydrolysis-dependent molecular chaperone, activating the urease apoprotein by helping to assemble the nickel containing metallocenter of UreC. The UreE protein probably delivers the nickel.

It localises to the cytoplasm. In terms of biological role, required for maturation of urease via the functional incorporation of the urease nickel metallocenter. In Paraburkholderia xenovorans (strain LB400), this protein is Urease accessory protein UreF.